A 283-amino-acid polypeptide reads, in one-letter code: Probable endonuclease 4 (283 aa).

The Zn(2+) site is built by His-69, His-109, Glu-145, Asp-179, His-182, His-216, Asp-229, His-231, and Glu-261.

Belongs to the AP endonuclease 2 family. Requires Zn(2+) as cofactor.

The catalysed reaction is Endonucleolytic cleavage to 5'-phosphooligonucleotide end-products.. Endonuclease IV plays a role in DNA repair. It cleaves phosphodiester bonds at apurinic or apyrimidinic (AP) sites, generating a 3'-hydroxyl group and a 5'-terminal sugar phosphate. This chain is Probable endonuclease 4, found in Prosthecochloris aestuarii (strain DSM 271 / SK 413).